The primary structure comprises 250 residues: 4-hydroxy-tetrahydrodipicolinate reductase (250 aa).

NAD(+) is bound by residues 10 to 15 (GARGRI), 78 to 80 (GTT), and 105 to 108 (APNF). The active-site Proton donor/acceptor is histidine 135. (S)-2,3,4,5-tetrahydrodipicolinate is bound at residue histidine 136. The Proton donor role is filled by lysine 139. 145–146 (GT) contacts (S)-2,3,4,5-tetrahydrodipicolinate. Residues 158-177 (RAEAGSAPQPDATTTALDGA) form a disordered region.

Belongs to the DapB family.

It localises to the cytoplasm. The enzyme catalyses (S)-2,3,4,5-tetrahydrodipicolinate + NAD(+) + H2O = (2S,4S)-4-hydroxy-2,3,4,5-tetrahydrodipicolinate + NADH + H(+). It catalyses the reaction (S)-2,3,4,5-tetrahydrodipicolinate + NADP(+) + H2O = (2S,4S)-4-hydroxy-2,3,4,5-tetrahydrodipicolinate + NADPH + H(+). Its pathway is amino-acid biosynthesis; L-lysine biosynthesis via DAP pathway; (S)-tetrahydrodipicolinate from L-aspartate: step 4/4. Catalyzes the conversion of 4-hydroxy-tetrahydrodipicolinate (HTPA) to tetrahydrodipicolinate. This Streptomyces griseus subsp. griseus (strain JCM 4626 / CBS 651.72 / NBRC 13350 / KCC S-0626 / ISP 5235) protein is 4-hydroxy-tetrahydrodipicolinate reductase.